Consider the following 442-residue polypeptide: GDP-L-galactose phosphorylase 1 (442 aa).

The active-site Tele-GMP-histidine intermediate is the His-238.

The protein belongs to the GDPGP1 family. In terms of assembly, interacts with TLP1. Expressed in leaves, stems, roots, flowers and siliques. Highest expression in green tissues.

The protein resides in the cytoplasm. The protein localises to the nucleus. The enzyme catalyses GDP-beta-L-galactose + phosphate = beta-L-galactose 1-phosphate + GDP + H(+). It participates in cofactor biosynthesis; L-ascorbate biosynthesis via GDP-alpha-D-mannose pathway; L-ascorbate from GDP-alpha-D-mannose: step 2/5. Not inhibited by dithiothreitol, N-ethylmaleimide, phenylmethane sulfonyl fluoride, ascorbate, L-galactose and L-galactonolactone. In terms of biological role, catalyzes a reaction of the Smirnoff-Wheeler pathway, the major route to ascorbate biosynthesis in plants. Acts as a phosphorylase rather than as a transferase. Uses preferentially GDP-L-galactose and GDP-D-glucose as substrates. Lower activity with GDP-L-fucose, very low activity with GDP-D-mannose, and no activity with UDP-D-glucose, UDP-D-galactose or ADP-D-glucose. Highly specific for inorganic phosphate as the guanylyl acceptor. The chain is GDP-L-galactose phosphorylase 1 (VTC2) from Arabidopsis thaliana (Mouse-ear cress).